The sequence spans 360 residues: Mannose-1-phosphate guanylyltransferase catalytic subunit beta (360 aa).

The segment at 2 to 222 (KALILVGGYG…QGFWMDIGQP (221 aa)) is substrate-binding domain. Asp-110 contacts GDP-alpha-D-mannose. Asp-110 contributes to the Mg(2+) binding site. Lys-162 is an active-site residue. Asp-218 contributes to the GDP-alpha-D-mannose binding site. The segment at 245–360 (YSGPGIVGNV…ESVPEPRIIM (116 aa)) is hexapeptide repeat domain.

The protein belongs to the transferase hexapeptide repeat family. In terms of assembly, component of the GMPPA-GMPPB mannose-1-phosphate guanylyltransferase complex composed of 4 GMPPA subunits and 8 GMPPB subunits; the complex is organized into three layers, a central layer made up of 2 GMPPA dimers sandwiched between two layers each made up of 2 GMPPB dimers. GMPPB catalytic activity is reduced when part of the complex and binding of GDP-alpha-D-Mannose by GMPPA induces allosteric feedback inhibition of GMPPB. The cofactor is Mg(2+).

The protein resides in the cytoplasm. The catalysed reaction is alpha-D-mannose 1-phosphate + GTP + H(+) = GDP-alpha-D-mannose + diphosphate. The protein operates within nucleotide-sugar biosynthesis; GDP-alpha-D-mannose biosynthesis; GDP-alpha-D-mannose from alpha-D-mannose 1-phosphate (GTP route): step 1/1. Its activity is regulated as follows. Enzyme activity is reduced by incorporation into the GMPPA-GMPPB mannose-1-phosphate guanylyltransferase complex. Allosterically inhibited, when part of the GMPPA-GMPPB complex, by GDP-alpha-D-mannose binding to GMPPA. Its function is as follows. Catalytic subunit of the GMPPA-GMPPB mannose-1-phosphate guanylyltransferase complex. Catalyzes the formation of GDP-mannose, an essential precursor of glycan moieties of glycoproteins and glycolipids. Can catalyze the reverse reaction in vitro. Together with GMPPA regulates GDP-alpha-D-mannose levels. This Mus musculus (Mouse) protein is Mannose-1-phosphate guanylyltransferase catalytic subunit beta.